A 281-amino-acid chain; its full sequence is Auxin-responsive protein IAA10 (281 aa).

Disordered regions lie at residues 1 to 115 (MRGG…VVGW) and 130 to 157 (AKEN…EEGE). The span at 7 to 17 (GPTAGEPPGTE) shows a compositional bias: low complexity. Residues 18–35 (AEAEEVEESSAGDDEELE) are compositionally biased toward acidic residues. The short motif at 36 to 40 (LGLSL) is the EAR-like (transcriptional repression) element. Composition is skewed to low complexity over residues 36 to 49 (LGLS…QQQQ) and 63 to 84 (PAAA…AAAA). Residues 133–157 (NTSETDTKKTATNESDVQKDKEEGE) are compositionally biased toward basic and acidic residues. Residues 163 to 259 (AGWVKVNMDG…KRLRIMRTSD (97 aa)) form the PB1 domain.

It belongs to the Aux/IAA family. In terms of assembly, homodimers and heterodimers. Highly expressed in flowers. Expressed in shoots.

It localises to the nucleus. Its function is as follows. Aux/IAA proteins are short-lived transcriptional factors that function as repressors of early auxin response genes at low auxin concentrations. This is Auxin-responsive protein IAA10 (IAA10) from Oryza sativa subsp. indica (Rice).